The chain runs to 179 residues: Serglycin (179 aa).

An N-terminal signal peptide occupies residues 1–26; it reads MRQVPVGTRLVLALAFVLVWGSSVQG. Positions 27 to 75 are cleaved as a propeptide — activation peptide; it reads YPARRARYQWVRCKPDGIFANCIEEKGPRFDLIAEESNVGPPMTDPVLM. An intrachain disulfide couples Cys39 to Cys48. Residues 86-145 form a disordered region; the sequence is SDDYSGSGSGSGSGSGSGSGSGSGSGSGSGSGSGSGSGSGSGSGSGSGSGSGSLADMEWE. 2 O-linked (Xyl...) (glycosaminoglycan) serine glycosylation sites follow: Ser90 and Ser92. A run of 24 repeats spans residues 90-91, 92-93, 94-95, 96-97, 98-99, 100-101, 102-103, 104-105, 106-107, 108-109, 110-111, 112-113, 114-115, 116-117, 118-119, 120-121, 122-123, 124-125, 126-127, 128-129, 130-131, 132-133, 134-135, and 136-137. The interval 90-137 is 24 X 2 AA tandem repeats of S-G; the sequence is SGSGSGSGSGSGSGSGSGSGSGSGSGSGSGSGSGSGSGSGSGSGSGSG. Positions 92–136 are enriched in gly residues; the sequence is SGSGSGSGSGSGSGSGSGSGSGSGSGSGSGSGSGSGSGSGSGSGS. O-linked (Xyl...) (glycosaminoglycan) serine glycosylation is found at Ser96, Ser98, Ser100, Ser102, Ser104, and Ser106.

This sequence belongs to the serglycin family. In terms of assembly, binds to activated CD44 and to GZMB. O-glycosylated; contains chondroitin sulfate and heparan sulfate.

The protein resides in the cytoplasmic granule. Its subcellular location is the cytolytic granule. It localises to the secreted. It is found in the extracellular space. The protein localises to the golgi apparatus. Functionally, plays a role in formation of mast cell secretory granules and mediates storage of various compounds in secretory vesicles. Required for storage of some proteases in both connective tissue and mucosal mast cells and for storage of granzyme B in T-lymphocytes. Plays a role in localizing neutrophil elastase in azurophil granules of neutrophils. Mediates processing of MMP2. Plays a role in cytotoxic cell granule-mediated apoptosis by forming a complex with granzyme B which is delivered to cells by perforin to induce apoptosis. Regulates the secretion of TNF-alpha and may also regulate protease secretion. Inhibits bone mineralization. This is Serglycin (Srgn) from Rattus norvegicus (Rat).